The sequence spans 198 residues: UPF0314 protein Atu8092 (198 aa).

3 consecutive transmembrane segments (helical) span residues 14 to 34 (LRWF…LYAM), 64 to 84 (WYTP…WLLF), and 150 to 170 (VPVW…GWLI).

The protein belongs to the UPF0314 family.

The protein resides in the cell membrane. The protein is UPF0314 protein Atu8092 of Agrobacterium fabrum (strain C58 / ATCC 33970) (Agrobacterium tumefaciens (strain C58)).